Here is a 435-residue protein sequence, read N- to C-terminus: uncharacterized protein (435 aa).

One can recognise an F-box domain in the interval 7–58 (PFPITKLPLVPRCKILKFFDYGDLLDISLCSKRMAQTVRDIHITADLHYLTL).

This is an uncharacterized protein from Caenorhabditis elegans.